Reading from the N-terminus, the 195-residue chain is E3 ubiquitin-protein ligase ZNRF1 (195 aa).

Polar residues predominate over residues 1–10; it reads MGGKQSSASR. Disordered regions lie at residues 1-36 and 61-84; these read MGGK…HFRA and PFGL…DSRG. Gly2 carries the N-myristoyl glycine lipid modification. Over residues 18 to 29 the composition is skewed to low complexity; the sequence is VSSDDSAVPPSS. The RING-type; atypical zinc-finger motif lies at 152–193; sequence CVICLEELSQGDTIARLPCLCIYHKSCIDSWFEVNRCCPEHP.

It localises to the endosome. The protein localises to the lysosome. The protein resides in the membrane. It carries out the reaction S-ubiquitinyl-[E2 ubiquitin-conjugating enzyme]-L-cysteine + [acceptor protein]-L-lysine = [E2 ubiquitin-conjugating enzyme]-L-cysteine + N(6)-ubiquitinyl-[acceptor protein]-L-lysine.. Its pathway is protein modification; protein ubiquitination. E3 ubiquitin-protein ligase that plays a role in neuron cells differentiation. Plays a role in the establishment and maintenance of neuronal transmission and plasticity. This is E3 ubiquitin-protein ligase ZNRF1 (znrf1) from Xenopus tropicalis (Western clawed frog).